Here is a 439-residue protein sequence, read N- to C-terminus: Adenylosuccinate synthetase (439 aa).

Residues 25 to 31 (GDEGKGK) and 53 to 55 (GHT) each bind GTP. D26 functions as the Proton acceptor in the catalytic mechanism. Mg(2+) contacts are provided by D26 and G53. IMP-binding positions include 26–29 (DEGK), 51–54 (NAGH), T146, R160, N237, T252, and R316. The active-site Proton donor is the H54. Residue 312–318 (VTTGRRR) participates in substrate binding. GTP contacts are provided by residues R318, 344–346 (KLD), and 426–428 (GVG).

It belongs to the adenylosuccinate synthetase family. As to quaternary structure, homodimer. It depends on Mg(2+) as a cofactor.

The protein localises to the cytoplasm. The catalysed reaction is IMP + L-aspartate + GTP = N(6)-(1,2-dicarboxyethyl)-AMP + GDP + phosphate + 2 H(+). It participates in purine metabolism; AMP biosynthesis via de novo pathway; AMP from IMP: step 1/2. In terms of biological role, plays an important role in the de novo pathway and in the salvage pathway of purine nucleotide biosynthesis. Catalyzes the first committed step in the biosynthesis of AMP from IMP. This Mycosarcoma maydis (Corn smut fungus) protein is Adenylosuccinate synthetase.